Consider the following 473-residue polypeptide: High-affinity proline transporter PutP (473 aa).

Transmembrane regions (helical) follow at residues 32–52 (LSAG…GAMF), 56–76 (LSGA…WLYV), 114–134 (IVIL…GGVL), 146–166 (GLWI…FLAV), 171–191 (FVQG…TFFH), 218–238 (VLGI…PHII), 256–276 (IGMG…LGGI), 299–319 (ILFH…AIMS), 350–370 (LVFL…VLAW), 376–396 (ILGL…PVVL), 408–428 (GALA…NAGL), and 431–451 (FLYE…FVSI).

Belongs to the sodium:solute symporter (SSF) (TC 2.A.21) family.

Its subcellular location is the cell membrane. The catalysed reaction is L-proline(in) + Na(+)(in) = L-proline(out) + Na(+)(out). Its function is as follows. Catalyzes the high-affinity uptake of extracellular proline. Important for the use of proline as a sole carbon and energy source or a sole nitrogen source. This chain is High-affinity proline transporter PutP, found in Bacillus subtilis (strain 168).